Reading from the N-terminus, the 349-residue chain is Sensory histidine kinase/phosphatase NtrB (349 aa).

The PAS domain maps to 5–78; it reads TQPDAGQILN…SLEAGQGFTD (74 aa). Residues 136-349 form the Histidine kinase domain; sequence GLAHEIKNPL…EFSVYLPIRK (214 aa). Position 139 is a phosphohistidine; by autocatalysis (H139). Position 329 (K329) interacts with ATP.

Autophosphorylated.

It localises to the cytoplasm. The enzyme catalyses ATP + protein L-histidine = ADP + protein N-phospho-L-histidine.. Its function is as follows. Member of the two-component regulatory system NtrB/NtrC, which controls expression of the nitrogen-regulated (ntr) genes in response to nitrogen limitation. Under conditions of nitrogen limitation, NtrB autophosphorylates and transfers the phosphoryl group to NtrC. In the presence of nitrogen, acts as a phosphatase that dephosphorylates and inactivates NtrC. The protein is Sensory histidine kinase/phosphatase NtrB (glnL) of Escherichia coli O157:H7.